The primary structure comprises 278 residues: HTH-type transcriptional activator RhaS (278 aa).

The HTH araC/xylS-type domain occupies 174-272 (NLLLAWLEDH…NWSPRDIRQG (99 aa)). DNA-binding regions (H-T-H motif) lie at residues 191–212 (DAVA…KQQT) and 239–262 (VTDI…RREF).

Binds DNA as a dimer.

The protein resides in the cytoplasm. Functionally, activates expression of the rhaBAD and rhaT operons. This is HTH-type transcriptional activator RhaS from Escherichia coli (strain SE11).